Consider the following 431-residue polypeptide: Adenylosuccinate synthetase (431 aa).

Residues 13 to 19 and 41 to 43 contribute to the GTP site; these read GDEGKGK and GHT. Asp14 (proton acceptor) is an active-site residue. Residues Asp14 and Gly41 each contribute to the Mg(2+) site. Residues 14-17, 39-42, Thr130, Arg144, Gln225, Thr240, and Arg304 contribute to the IMP site; these read DEGK and NAGH. The Proton donor role is filled by His42. 300 to 306 contributes to the substrate binding site; sequence ATTGRAR. GTP contacts are provided by residues Arg306, 332–334, and 415–417; these read KLD and STG.

The protein belongs to the adenylosuccinate synthetase family. As to quaternary structure, homodimer. Mg(2+) is required as a cofactor.

The protein localises to the cytoplasm. It carries out the reaction IMP + L-aspartate + GTP = N(6)-(1,2-dicarboxyethyl)-AMP + GDP + phosphate + 2 H(+). It functions in the pathway purine metabolism; AMP biosynthesis via de novo pathway; AMP from IMP: step 1/2. Plays an important role in the de novo pathway of purine nucleotide biosynthesis. Catalyzes the first committed step in the biosynthesis of AMP from IMP. The polypeptide is Adenylosuccinate synthetase (Ectopseudomonas mendocina (strain ymp) (Pseudomonas mendocina)).